A 159-amino-acid chain; its full sequence is Small ribosomal subunit protein uS7 (159 aa).

The protein belongs to the universal ribosomal protein uS7 family. In terms of assembly, part of the 30S ribosomal subunit. Contacts proteins S9 and S11.

One of the primary rRNA binding proteins, it binds directly to 16S rRNA where it nucleates assembly of the head domain of the 30S subunit. Is located at the subunit interface close to the decoding center, probably blocks exit of the E-site tRNA. The protein is Small ribosomal subunit protein uS7 of Endomicrobium trichonymphae.